A 247-amino-acid chain; its full sequence is Large ribosomal subunit protein uL24m (247 aa).

The KOW domain occupies 84–117 (FFRGDRIEVLVGKDKGKQGIVTQVIPERNWVIVE).

This sequence belongs to the universal ribosomal protein uL24 family. As to quaternary structure, component of the mitochondrial ribosome large subunit (39S) which comprises a 16S rRNA and about 50 distinct proteins.

It localises to the mitochondrion. The sequence is that of Large ribosomal subunit protein uL24m (mRpL24) from Drosophila pseudoobscura pseudoobscura (Fruit fly).